We begin with the raw amino-acid sequence, 147 residues long: MKVLLIKDVKSLGKAGEIKEVKDGYGQNFLINKGLAKLATPDVVENWKAEQARQEKELKEEIERFEAEKKMLEAHTIRIEKQSAPVGIKGSVGNADISAAIKEQLDIDLDKKHINLKKALKSTGIHEVDAKLGHGIHATLKVEVVGV.

The protein belongs to the bacterial ribosomal protein bL9 family.

Binds to the 23S rRNA. This is Large ribosomal subunit protein bL9 from Sulfurovum sp. (strain NBC37-1).